A 178-amino-acid chain; its full sequence is Large ribosomal subunit protein uL6 (178 aa).

Belongs to the universal ribosomal protein uL6 family. Part of the 50S ribosomal subunit.

Its function is as follows. This protein binds to the 23S rRNA, and is important in its secondary structure. It is located near the subunit interface in the base of the L7/L12 stalk, and near the tRNA binding site of the peptidyltransferase center. In Streptococcus pneumoniae (strain 70585), this protein is Large ribosomal subunit protein uL6.